Reading from the N-terminus, the 548-residue chain is Thermostable neutral protease NprT (548 aa).

Positions 1-25 (MNKRAMLGAIGLAFGLLAAPIGASA) are cleaved as a signal peptide. Residues 26–229 (KGESIVWNEQ…DSRQPGGGQP (204 aa)) constitute a propeptide, activation peptide. Residues D289, D291, Q293, and D370 each contribute to the Ca(2+) site. H374 is a binding site for Zn(2+). E375 is an active-site residue. H378 and E398 together coordinate Zn(2+). Ca(2+) is bound by residues E409, N415, D417, E419, E422, Y425, T426, V429, and D432. H463 functions as the Proton donor in the catalytic mechanism.

The protein belongs to the peptidase M4 family. Ca(2+) is required as a cofactor. The cofactor is Zn(2+).

The protein localises to the secreted. Its casein hydrolytic activity is inhibited almost completely by a chelating agent (EDTA), whereas neither diisopropyl fluorophosphate nor phenylmethylsulfonyl fluoride inhibit the proteolytic activity in vitro. Extracellular zinc metalloprotease. This Geobacillus stearothermophilus (Bacillus stearothermophilus) protein is Thermostable neutral protease NprT (nprT).